The chain runs to 474 residues: ATP synthase subunit beta (474 aa).

Residue 152 to 159 coordinates ATP; that stretch reads GGAGVGKT.

The protein belongs to the ATPase alpha/beta chains family. In terms of assembly, F-type ATPases have 2 components, CF(1) - the catalytic core - and CF(0) - the membrane proton channel. CF(1) has five subunits: alpha(3), beta(3), gamma(1), delta(1), epsilon(1). CF(0) has four main subunits: a(1), b(1), b'(1) and c(9-12).

The protein resides in the cell inner membrane. It catalyses the reaction ATP + H2O + 4 H(+)(in) = ADP + phosphate + 5 H(+)(out). Its function is as follows. Produces ATP from ADP in the presence of a proton gradient across the membrane. The catalytic sites are hosted primarily by the beta subunits. The polypeptide is ATP synthase subunit beta (Rhodospirillum rubrum (strain ATCC 11170 / ATH 1.1.1 / DSM 467 / LMG 4362 / NCIMB 8255 / S1)).